The sequence spans 237 residues: Large ribosomal subunit protein uL1 (237 aa).

This sequence belongs to the universal ribosomal protein uL1 family. Part of the 50S ribosomal subunit.

Functionally, binds directly to 23S rRNA. The L1 stalk is quite mobile in the ribosome, and is involved in E site tRNA release. Protein L1 is also a translational repressor protein, it controls the translation of the L11 operon by binding to its mRNA. This is Large ribosomal subunit protein uL1 from Chloroflexus aurantiacus (strain ATCC 29364 / DSM 637 / Y-400-fl).